A 1345-amino-acid chain; its full sequence is DNA-directed RNA polymerase subunit beta (1345 aa).

This sequence belongs to the RNA polymerase beta chain family. In terms of assembly, the RNAP catalytic core consists of 2 alpha, 1 beta, 1 beta' and 1 omega subunit. When a sigma factor is associated with the core the holoenzyme is formed, which can initiate transcription.

The catalysed reaction is RNA(n) + a ribonucleoside 5'-triphosphate = RNA(n+1) + diphosphate. In terms of biological role, DNA-dependent RNA polymerase catalyzes the transcription of DNA into RNA using the four ribonucleoside triphosphates as substrates. In Shewanella sp. (strain MR-4), this protein is DNA-directed RNA polymerase subunit beta.